A 392-amino-acid polypeptide reads, in one-letter code: Early estrogen-induced gene 1 protein (392 aa).

Residues 2–145 enclose the C2 NT-type domain; it reads AFLMKKKKFK…ILKVTIGMFL (144 aa). The interval 129–138 is required for interaction with TNFRSF11A/RANK; it reads NTRQDNSILK. The disordered stretch occupies residues 173–324; it reads LTCKGGGTSS…RKKDSVESHP (152 aa). Positions 183–194 are enriched in low complexity; it reads GGSSSTNSLTGS. Positions 228–255 are enriched in polar residues; it reads SRNSSYASQQSKLSGYSTEHSRSSSLSD. Low complexity predominate over residues 262–273; the sequence is TSTSSSASGGLS. Basic and acidic residues-rich tracts occupy residues 281–300 and 307–324; these read GMER…EKPP and HLSD…ESHP.

This sequence belongs to the EEIG family. Part of a complex composed of EEIG1, TNFRSF11A/RANK, PLCG2, GAB2, TEC and BTK; complex formation increases in the presence of TNFSF11/RANKL. Interacts with PRDM1/BLIMP1; following TNFSF11/RANKL stimulation in bone marrow-derived macrophages, the interaction promotes the binding of PRDM1/BLIMP1 to the gene promoter of IRF8. Interacts (via N-terminus) with TNFRSF11A/RANK (via cytoplasmic domain); when in the presence of TNFSF11/RANKL. In terms of tissue distribution, expressed during TNFSF11/RANKL-induced differentiation of bone marrow-derived macrophages to osteoclasts.

The protein resides in the nucleus. Its subcellular location is the cytoplasm. The protein localises to the membrane raft. In terms of biological role, key component of TNFSF11/RANKL- and TNF-induced osteoclastogenesis pathways, thereby mediates bone resorption in pathological bone loss conditions. Required for TNFSF11/RANKL-induced osteoclastogenesis via its interaction with TNFRSF11A/RANK, thereby facilitates the downsteam transcription of NFATC1 and activation of PLCG2. Facilitates recruitment of the transcriptional repressor PRDM1/BLIMP1 to the promoter of the anti-osteoclastogenesis gene IRF8, thereby resulting in transcription of osteoclast differentiation factors. May play a role in estrogen action. The sequence is that of Early estrogen-induced gene 1 protein (Eeig1) from Mus musculus (Mouse).